Here is a 380-residue protein sequence, read N- to C-terminus: Cytochrome b (380 aa).

Transmembrane regions (helical) follow at residues 33 to 53 (FGSL…FLAM), 77 to 98 (WLIR…FLHV), 113 to 133 (WNMG…GYVL), and 178 to 198 (FFAF…VHLL). Heme b-binding residues include H83 and H97. H182 and H196 together coordinate heme b. A ubiquinone is bound at residue H201. The next 4 helical transmembrane spans lie at 226–246 (IKDF…VLFF), 288–308 (LGGV…PLLH), 320–340 (ITQT…WIGG), and 347–367 (FIMI…IFMP).

The protein belongs to the cytochrome b family. The cytochrome bc1 complex contains 11 subunits: 3 respiratory subunits (MT-CYB, CYC1 and UQCRFS1), 2 core proteins (UQCRC1 and UQCRC2) and 6 low-molecular weight proteins (UQCRH/QCR6, UQCRB/QCR7, UQCRQ/QCR8, UQCR10/QCR9, UQCR11/QCR10 and a cleavage product of UQCRFS1). This cytochrome bc1 complex then forms a dimer. The cofactor is heme b.

It localises to the mitochondrion inner membrane. Component of the ubiquinol-cytochrome c reductase complex (complex III or cytochrome b-c1 complex) that is part of the mitochondrial respiratory chain. The b-c1 complex mediates electron transfer from ubiquinol to cytochrome c. Contributes to the generation of a proton gradient across the mitochondrial membrane that is then used for ATP synthesis. This Chionomys roberti (Robert's snow vole) protein is Cytochrome b (MT-CYB).